A 300-amino-acid chain; its full sequence is UDP-3-O-acyl-N-acetylglucosamine deacetylase (300 aa).

Zn(2+) is bound by residues histidine 76, histidine 235, and aspartate 239. Histidine 262 serves as the catalytic Proton donor.

This sequence belongs to the LpxC family. The cofactor is Zn(2+).

It carries out the reaction a UDP-3-O-[(3R)-3-hydroxyacyl]-N-acetyl-alpha-D-glucosamine + H2O = a UDP-3-O-[(3R)-3-hydroxyacyl]-alpha-D-glucosamine + acetate. Its pathway is glycolipid biosynthesis; lipid IV(A) biosynthesis; lipid IV(A) from (3R)-3-hydroxytetradecanoyl-[acyl-carrier-protein] and UDP-N-acetyl-alpha-D-glucosamine: step 2/6. In terms of biological role, catalyzes the hydrolysis of UDP-3-O-myristoyl-N-acetylglucosamine to form UDP-3-O-myristoylglucosamine and acetate, the committed step in lipid A biosynthesis. This is UDP-3-O-acyl-N-acetylglucosamine deacetylase from Halorhodospira halophila (strain DSM 244 / SL1) (Ectothiorhodospira halophila (strain DSM 244 / SL1)).